A 380-amino-acid polypeptide reads, in one-letter code: Chorismate synthase (380 aa).

Arginine 47 contributes to the NADP(+) binding site. FMN-binding positions include 124–126, glycine 288, 303–307, and arginine 329; these read RSS and KPTST.

It belongs to the chorismate synthase family. In terms of assembly, homotetramer. Requires FMNH2 as cofactor.

The catalysed reaction is 5-O-(1-carboxyvinyl)-3-phosphoshikimate = chorismate + phosphate. The protein operates within metabolic intermediate biosynthesis; chorismate biosynthesis; chorismate from D-erythrose 4-phosphate and phosphoenolpyruvate: step 7/7. Functionally, catalyzes the anti-1,4-elimination of the C-3 phosphate and the C-6 proR hydrogen from 5-enolpyruvylshikimate-3-phosphate (EPSP) to yield chorismate, which is the branch point compound that serves as the starting substrate for the three terminal pathways of aromatic amino acid biosynthesis. This reaction introduces a second double bond into the aromatic ring system. This chain is Chorismate synthase, found in Leptospira interrogans serogroup Icterohaemorrhagiae serovar copenhageni (strain Fiocruz L1-130).